Here is a 123-residue protein sequence, read N- to C-terminus: Inter-alpha-trypsin inhibitor (123 aa).

2 consecutive BPTI/Kunitz inhibitor domains span residues 5–55 (CQLG…LQTC) and 61–111 (CNLP…KEYC). Cystine bridges form between Cys-5–Cys-55, Cys-14–Cys-38, Cys-30–Cys-51, Cys-61–Cys-111, Cys-70–Cys-94, and Cys-86–Cys-107. An N-linked (GlcNAc...) asparagine glycan is attached at Asn-24.

The protein resides in the secreted. Functionally, this inhibitory fragment, released from native ITI after limited proteolysis with trypsin, contains two homologous domains. Whereas the second domain is a strong inhibitor of trypsin, the first domain interacts weakly with PMN-granulocytic elastase and not at all with pancreatic elastase. The sequence is that of Inter-alpha-trypsin inhibitor from Capra hircus (Goat).